The following is a 202-amino-acid chain: MRLERLNYNKIKIFLTFDDLSERGLTKEDLWRNAPKVQQLFRDMMQEANKELGFEADGPIAVEVFSLQAQGMVVIVTKEHQEADTDDEFRDEFIEMQVTLDESEHILYEFATLDDVINLSNRLYNLDVTGGKLYTWDGRFYLWMEEEEQIQLLKADFIAILAEYGNPSTATIYRLMEYGKELMASQAIEQIHNYFVKKQNLS.

Belongs to the MecA family. As to quaternary structure, homodimer.

Its function is as follows. Enables the recognition and targeting of unfolded and aggregated proteins to the ClpC protease or to other proteins involved in proteolysis. Acts negatively in the development of competence by binding ComK and recruiting it to the ClpCP protease. When overexpressed, inhibits sporulation. Also involved in Spx degradation by ClpC. The sequence is that of Adapter protein MecA 2 (mecA2) from Bacillus anthracis.